We begin with the raw amino-acid sequence, 132 residues long: UPF0047 protein YugU (132 aa).

It belongs to the UPF0047 family.

The polypeptide is UPF0047 protein YugU (yugU) (Bacillus subtilis (strain 168)).